A 1046-amino-acid polypeptide reads, in one-letter code: UDP-N-acetylglucosamine--peptide N-acetylglucosaminyltransferase 110 kDa subunit (1046 aa).

Alanine 2 is subject to N-acetylalanine. Phosphoserine; by GSK3-beta; alternate occurs at positions 3 and 4. O-linked (GlcNAc) serine; alternate glycans are attached at residues serine 3 and serine 4. A Phosphoserine modification is found at serine 20. 12 TPR repeats span residues 21–54 (FQGL…EPDN), 89–122 (AEAY…KPDF), 123–156 (IDGY…NPDL), 157–190 (YCVR…QPNF), 191–224 (AVAW…DPNF), 225–258 (LDAY…SPNH), 259–292 (AVVH…QPHF), 293–326 (PDAY…CPTH), 327–360 (ADSL…FPEF), 361–394 (AAAH…SPTF), 395–428 (ADAY…NPAF), and 429–462 (ADAH…KPDF). O-linked (GlcNAc) serine; by autocatalysis glycosylation is present at serine 399. Residue threonine 454 is modified to Phosphothreonine. The TPR 13; truncated repeat unit spans residues 463–473 (PDAYCNLAHCL). Positions 464 to 466 (DAY) match the DFP motif motif. A Nuclear localization signal motif is present at residues 487-503 (KKLVSIVADQLEKNRLP). The active-site Proton acceptor is histidine 508. Residues glutamine 849, lysine 852, 906–908 (APK), 911–914 (HVRR), 930–932 (HTT), and aspartate 935 each bind UDP. Tyrosine 989 is modified (phosphotyrosine). The required for phosphatidylinositol 3,4,5-triphosphate binding stretch occupies residues 991–1010 (KKIRGKVWKQRISSPLFNTK).

The protein belongs to the glycosyltransferase 41 family. O-GlcNAc transferase subfamily. In terms of assembly, monomer; may exist in different oligomerization states in cells. Homotrimer, oligomerizes via TPR repeats 6 and 7. Trimerization is not necessary for activity in vitro, however it increases affinity for UDP-GlcNAc. Component of a THAP1/THAP3-HCFC1-OGT complex. Component of the NSL complex at least composed of MOF/KAT8, KANSL1, KANSL2, KANSL3, MCRS1, PHF20, OGT1/OGT, WDR5 and HCFC1. Found in a complex with KIF5B, RHOT1, RHOT2 and TRAK1. Found in a complex composed of at least SINHCAF, SIN3A, HDAC1, SAP30, RBBP4, OGT and TET1. Component of a complex composed of KMT2E/MLL5, OGT and USP7; the complex stabilizes KMT2E/MLL5, preventing KMT2E/MLL5 ubiquitination and proteasomal-mediated degradation. Interacts (via TPRs 1-6) with SIN3A; the interaction mediates transcriptional repression in parallel with histone deacetylase. Interacts (via TPR 5-6) with TET1, TET2 and TET3. Interacts (via TPR repeats 6 and 7) with ATXN10. Interacts with NSD2. Interacts with PROSER1; this interaction mediates TET2 O-GlcNAcylation and stability by promoting the interaction between OGT and TET2. Ubiquitinated by the SCF(FBXO31) complex, leading to its proteasomal degradation. In terms of processing, phosphorylation on Ser-3 or Ser-4 by GSK3-beta positively regulates its activity. Phosphorylation at Thr-454 by AMPK promotes nuclear localization. Post-translationally, glycosylated via autocatalysis; O-GlcNAcylation at Ser-399 promotes nuclear localization.

The protein resides in the nucleus. The protein localises to the cytoplasm. It catalyses the reaction L-seryl-[protein] + UDP-N-acetyl-alpha-D-glucosamine = 3-O-(N-acetyl-beta-D-glucosaminyl)-L-seryl-[protein] + UDP + H(+). The catalysed reaction is L-threonyl-[protein] + UDP-N-acetyl-alpha-D-glucosamine = 3-O-(N-acetyl-beta-D-glucosaminyl)-L-threonyl-[protein] + UDP + H(+). Its pathway is protein modification; protein glycosylation. With respect to regulation, subject to product inhibition by UDP. In terms of biological role, catalyzes the transfer of a single N-acetylglucosamine from UDP-GlcNAc to a serine or threonine residue in cytoplasmic and nuclear proteins resulting in their modification with a beta-linked N-acetylglucosamine (O-GlcNAc). Glycosylates a large and diverse number of proteins including histone H2B, AKT1, AMPK, ATG4B, CAPRIN1, EZH2, FNIP1, GSDMD, KRT7, LMNA, LMNB1, LMNB2, RPTOR, HOXA1, PFKL, KMT2E/MLL5, MAPT/TAU, TET2, RBL2, RET, NOD2 and HCFC1. Can regulate their cellular processes via cross-talk between glycosylation and phosphorylation or by affecting proteolytic processing. Involved in insulin resistance in muscle and adipocyte cells via glycosylating insulin signaling components and inhibiting the 'Thr-308' phosphorylation of AKT1, enhancing IRS1 phosphorylation and attenuating insulin signaling. Involved in glycolysis regulation by mediating glycosylation of 6-phosphofructokinase PFKL, inhibiting its activity. Plays a key role in chromatin structure by mediating O-GlcNAcylation of 'Ser-112' of histone H2B: recruited to CpG-rich transcription start sites of active genes via its interaction with TET proteins (TET1, TET2 or TET3). As part of the NSL complex indirectly involved in acetylation of nucleosomal histone H4 on several lysine residues. O-GlcNAcylation of 'Ser-75' of EZH2 increases its stability, and facilitating the formation of H3K27me3 by the PRC2/EED-EZH2 complex. Stabilizes KMT2E/MLL5 by mediating its glycosylation, thereby preventing KMT2E/MLL5 ubiquitination. Regulates circadian oscillation of the clock genes and glucose homeostasis in the liver. Stabilizes clock proteins BMAL1 and CLOCK through O-glycosylation, which prevents their ubiquitination and subsequent degradation. Promotes the CLOCK-BMAL1-mediated transcription of genes in the negative loop of the circadian clock such as PER1/2 and CRY1/2. O-glycosylates HCFC1 and regulates its proteolytic processing and transcriptional activity. Component of a THAP1/THAP3-HCFC1-OGT complex that is required for the regulation of the transcriptional activity of RRM1. Regulates mitochondrial motility in neurons by mediating glycosylation of TRAK1. Promotes autophagy by mediating O-glycosylation of ATG4B. Acts as a regulator of mTORC1 signaling by mediating O-glycosylation of RPTOR and FNIP1: O-GlcNAcylation of RPTOR in response to glucose sufficiency promotes activation of the mTORC1 complex. This chain is UDP-N-acetylglucosamine--peptide N-acetylglucosaminyltransferase 110 kDa subunit (OGT), found in Sus scrofa (Pig).